The primary structure comprises 994 residues: ASI1-immunoprecipitated protein 2 (994 aa).

Disordered regions lie at residues 39 to 182 (AEFS…SGEN) and 187 to 206 (KADESNTSAMSDSESENDPE). The segment covering 45–54 (KSDESSDENS) has biased composition (basic and acidic residues). Over residues 60 to 102 (SQCSFNGDNLLRSSGVNAPGSSHNTSSEASHLVNSNHDTSSEN) the composition is skewed to polar residues. Composition is skewed to basic and acidic residues over residues 119–140 (LLDRPHKDQDSMKVDSCNDHQA) and 148–163 (KVKEKSGAKNNEEKKN). The PHD-type zinc finger occupies 212–263 (VKVCDTCGDAGREDLLAICSRCSDGAEHTYCMRVMLKKVPKGYWLCEECKFA). The Zn(2+) site is built by C215, C218, C230, C233, H239, C242, C257, and C260. Disordered stretches follow at residues 342-567 (AHYS…NNKG) and 839-875 (CSNPPKNTPLPASCVSPNRDTFRHENPSNKKSLTDRT). Over residues 371–384 (SFLKSNSFNSLSSR) the composition is skewed to low complexity. Composition is skewed to polar residues over residues 417-435 (VGKSMSSRCIDVGSSNCND) and 449-464 (TEANPSASISRGNSSI). Basic and acidic residues-rich tracts occupy residues 469–478 (SPRDLKDLQS), 536–552 (PRSREFREAGEKTKDAV), and 858–875 (DTFRHENPSNKKSLTDRT).

Component of the ASI1-AIPP1-EDM2 (AAE) RNA regulatory complex composed of at least AIPP1/EDM3, ASI1 and EDM2 and may contain CPL2, AIPP2 and AIPP3/BDT1. Part of the BAH-PHD bivalent histone reader complex that contains AIPP2, PAIPP2 and AIPP3/BDT1; the BAH-PHD module associates with CPL2 to form the BAH-PHD-CPL2 complex (BPC) for transcriptional repression. Binds directly to ASI1, AIPP3/BDT1 and CPL2 but not to PAIPP2. Expressed ubiquitously.

In terms of biological role, together with AIPP3/BDT1 and PAIPP2, cooperates to form a BAH-PHD bivalent histone reader complex able to read histone H3 lysine 27 trimethylation (H3K27me3) and low-methylated H3K4 histone marks in order to regulate transcription, especially to prevent early flowering; promotes AIPP3/BDT1 binding to H3K27me3. CPL2 is subsequently recruited to form a BAH-PHD-CPL2 complex (BPC) in order to silence several H3K27me3 and low-methylated H3K4 enriched loci, including AGO5, via the phosphorylation state-dependent inhibition of Pol II release from the transcriptional start site (e.g. Ser5P-Pol II dephosphorylation). The BPC complex represses flowering by inhibiting the expression of several genes, including AGL6, FT, FUL and SOC1. Prevents the accumulation of intronic heterochromatin-containing genes (e.g. IBM1, At3g05410 and RPP7). The chain is ASI1-immunoprecipitated protein 2 from Arabidopsis thaliana (Mouse-ear cress).